The sequence spans 113 residues: U11-theraphotoxin-Hhn1a (113 aa).

A signal peptide spans 1–21 (MNTVRVTFLLVFVLAVSLGQA). A propeptide spanning residues 22–74 (DKDENRMEVQEKTEQGKSYLDFAENLLLQKLEELEAKLLEEDSEESRNSRQKR) is cleaved from the precursor. Positions 61–83 (EEDSEESRNSRQKRCIGEGVPCD) are disordered. 3 disulfide bridges follow: Cys75-Cys90, Cys82-Cys95, and Cys89-Cys110.

The protein belongs to the neurotoxin 14 (magi-1) family. 01 (HNTX-16) subfamily. Expressed by the venom gland.

It localises to the secreted. Its function is as follows. Probable ion channel inhibitor. In Cyriopagopus hainanus (Chinese bird spider), this protein is U11-theraphotoxin-Hhn1a.